Here is a 187-residue protein sequence, read N- to C-terminus: Protein GrpE (187 aa).

Residues 1-11 (MTDSSNEHETE) show a composition bias toward basic and acidic residues. Residues 1–23 (MTDSSNEHETENPSVPNPDNEIQ) are disordered.

This sequence belongs to the GrpE family. In terms of assembly, homodimer.

It localises to the cytoplasm. Functionally, participates actively in the response to hyperosmotic and heat shock by preventing the aggregation of stress-denatured proteins, in association with DnaK and GrpE. It is the nucleotide exchange factor for DnaK and may function as a thermosensor. Unfolded proteins bind initially to DnaJ; upon interaction with the DnaJ-bound protein, DnaK hydrolyzes its bound ATP, resulting in the formation of a stable complex. GrpE releases ADP from DnaK; ATP binding to DnaK triggers the release of the substrate protein, thus completing the reaction cycle. Several rounds of ATP-dependent interactions between DnaJ, DnaK and GrpE are required for fully efficient folding. This is Protein GrpE from Chlamydia felis (strain Fe/C-56) (Chlamydophila felis).